Consider the following 406-residue polypeptide: Phosphatidylserine decarboxylase proenzyme, mitochondrial (406 aa).

The transit peptide at 1–49 (MAVAGGRGCVRSLREGVLWRSSPCHCDYTATRHFLGALQKLPLQAWVRK) directs the protein to the mitochondrion. Over 50-60 (VHTAPLRTLFL) the chain is Mitochondrial matrix. Residues 61–79 (LRPVPILLAAGGGYAGYRQ) traverse the membrane as a helical segment. The Mitochondrial intermembrane segment spans residues 80-406 (YEKYRERQLE…ILFGEALGSL (327 aa)). Residues Asp-188, His-264, and Ser-375 each act as charge relay system; for autoendoproteolytic cleavage activity in the active site. Ser-375 functions as the Schiff-base intermediate with substrate; via pyruvic acid; for decarboxylase activity in the catalytic mechanism. Ser-375 is subject to Pyruvic acid (Ser); by autocatalysis.

Belongs to the phosphatidylserine decarboxylase family. PSD-B subfamily. Eukaryotic type I sub-subfamily. Heterodimer of a large membrane-associated beta subunit and a small pyruvoyl-containing alpha subunit. Pyruvate serves as cofactor. Post-translationally, is synthesized initially as an inactive proenzyme. Formation of the active enzyme involves a self-maturation process in which the active site pyruvoyl group is generated from an internal serine residue via an autocatalytic post-translational modification. Two non-identical subunits are generated from the proenzyme in this reaction, and the pyruvate is formed at the N-terminus of the alpha chain, which is derived from the carboxyl end of the proenzyme. The autoendoproteolytic cleavage occurs by a canonical serine protease mechanism, in which the side chain hydroxyl group of the serine supplies its oxygen atom to form the C-terminus of the beta chain, while the remainder of the serine residue undergoes an oxidative deamination to produce ammonia and the pyruvoyl prosthetic group on the alpha chain. During this reaction, the Ser that is part of the protease active site of the proenzyme becomes the pyruvoyl prosthetic group, which constitutes an essential element of the active site of the mature decarboxylase.

Its subcellular location is the mitochondrion inner membrane. The protein resides in the cytoplasm. It localises to the lipid droplet. The catalysed reaction is a 1,2-diacyl-sn-glycero-3-phospho-L-serine + H(+) = a 1,2-diacyl-sn-glycero-3-phosphoethanolamine + CO2. The protein operates within phospholipid metabolism; phosphatidylethanolamine biosynthesis. With respect to regulation, inhibited by hydroxylamine. Functionally, catalyzes the formation of phosphatidylethanolamine (PtdEtn) from phosphatidylserine (PtdSer). Plays a central role in phospholipid metabolism and in the interorganelle trafficking of phosphatidylserine. May be involved in lipid droplet biogenesis at the endoplasmic reticulum membrane. This chain is Phosphatidylserine decarboxylase proenzyme, mitochondrial, found in Rattus norvegicus (Rat).